The sequence spans 189 residues: Protein YOP1 (189 aa).

Residues M1–P35 lie on the Cytoplasmic side of the membrane. The chain crosses the membrane as a helical span at residues K36–I55. Residues G56–G57 are Lumenal-facing. A helical transmembrane segment spans residues I58–A78. Residues L79–T88 lie on the Cytoplasmic side of the membrane. The helical transmembrane segment at Q89–F105 threads the bilayer. Residues W106–K108 lie on the Lumenal side of the membrane. A helical transmembrane segment spans residues A109 to Y127. The Cytoplasmic portion of the chain corresponds to I128–H189.

This sequence belongs to the DP1 family. Oligomer.

It is found in the endoplasmic reticulum membrane. The protein localises to the golgi apparatus membrane. In terms of biological role, required to generate and maintain the structure of the tubular endoplasmic reticulum network and the vacuole. Induces high curvature in membranes and causes membrane tubule formation. Involved in membrane/vesicle trafficking. The protein is Protein YOP1 (YOP1) of Yarrowia lipolytica (strain CLIB 122 / E 150) (Yeast).